The chain runs to 468 residues: 3-isopropylmalate dehydratase large subunit (468 aa).

The [4Fe-4S] cluster site is built by Cys-347, Cys-407, and Cys-410.

It belongs to the aconitase/IPM isomerase family. LeuC type 1 subfamily. As to quaternary structure, heterodimer of LeuC and LeuD. Requires [4Fe-4S] cluster as cofactor.

It catalyses the reaction (2R,3S)-3-isopropylmalate = (2S)-2-isopropylmalate. Its pathway is amino-acid biosynthesis; L-leucine biosynthesis; L-leucine from 3-methyl-2-oxobutanoate: step 2/4. In terms of biological role, catalyzes the isomerization between 2-isopropylmalate and 3-isopropylmalate, via the formation of 2-isopropylmaleate. The protein is 3-isopropylmalate dehydratase large subunit of Prochlorococcus marinus (strain SARG / CCMP1375 / SS120).